The primary structure comprises 116 residues: Putative BPES syndrome breakpoint region protein (116 aa).

Seems to be expressed only in testis.

The polypeptide is Putative BPES syndrome breakpoint region protein (BPESC1) (Homo sapiens (Human)).